The following is a 392-amino-acid chain: MRDVAIIGYGQTKFGELWEDSFRDLIVEAGVKAIKDANVDGGDIDAMYIGNMSGGLFVGQEHIASLIADHAGLNPVPCTRVEAACASGSLALRSAVLSVASGHHDVVLAGGVEKMTDVEDATAAIASASDQEWEAFFGATFPSLYAMMARRYMYQYGLTIEELSMWSVIAHENATKNKYAQFGFKTTLEQVMNASPVADPLTLMHCSPVSDGASALIVCDADKAEEFAPKDEIIYIKASTQASDTIALHDREDMTTLNAAKVASEKAYKLAKIAPEKIDVAEVHDCFAINGLILVEDLGFCKKGDAGKVIDEGKIRIDYDDFVTVNPSGGLKAAGHALGATGIRQVGELYWQLKQDKECKDRQATIKNGYGIAANVGGTGGTVCVHLLSDKR.

Cys85 serves as the catalytic Acyl-thioester intermediate. Residues Cys206, Ser207, Val209, and Lys332 each coordinate CoA. His336 functions as the Proton acceptor in the catalytic mechanism.

It belongs to the thiolase-like superfamily. Thiolase family. In terms of assembly, interacts with HMG-CoA synthase (HMGCS) that catalyzes the second step in the pathway and with a DUF35 protein. The acetoacetyl-CoA thiolase/HMG-CoA synthase complex channels the intermediate via a fused CoA-binding site, which allows for efficient coupling of the endergonic thiolase reaction with the exergonic HMGCS reaction.

It catalyses the reaction 2 acetyl-CoA = acetoacetyl-CoA + CoA. The protein operates within metabolic intermediate biosynthesis; (R)-mevalonate biosynthesis; (R)-mevalonate from acetyl-CoA: step 1/3. Functionally, catalyzes the condensation of two acetyl-coA molecules into acetoacetyl-CoA. Functions in the mevalonate (MVA) pathway leading to isopentenyl diphosphate (IPP), a key precursor for the biosynthesis of isoprenoid compounds that are building blocks of archaeal membrane lipids. This Methanothermococcus thermolithotrophicus (Methanococcus thermolithotrophicus) protein is Acetyl-CoA acetyltransferase.